The primary structure comprises 74 residues: Antimicrobial peptide HsAp2 (74 aa).

The signal sequence occupies residues 1 to 21 (MSRRLILILVLVAMLVKTMAG). A propeptide spanning residues 22-33 (MESKWVETTYEI) is cleaved from the precursor. Proline amide is present on P65. A propeptide spanning residues 69–74 (AISEQT) is cleaved from the precursor.

The protein belongs to the non-disulfide-bridged peptide (NDBP) superfamily. Medium-length antimicrobial peptide (group 3) family. Expressed by the venom gland.

It localises to the secreted. Its subcellular location is the target cell membrane. Its function is as follows. Possesses antimicrobial activity against both Gram-negative and Gram-positive bacteria, as well as against the fungus C.tropicalis. Also possesses a relatively high hemolytic activity. May act by disrupting the integrity of the bacterial cell membrane. In Heterometrus spinifer (Asia giant forest scorpion), this protein is Antimicrobial peptide HsAp2.